A 309-amino-acid chain; its full sequence is MVAVLQSTFAIIFSMEFIVGTLGNGFIILMTCIDWVRRRKISLVDQILTALAITRITLILLVFIDWWVSVLFPALHETGKILRMYFISWTVINHCNLWLTASLSIIYFLKIASFSSIIFLYLKFRVKNVVFVTLLVSLFFLFINTAIVNVYFDVCFDGVQRNVSQVSRLYNHEQICKFLSFTNPMFAFIPFVTSMATFFLLIFSLWRHLKNMKHNAEGCRDVSTIVHIRALQTIIVSVVLYSTFFLSFFVKVWSSGSPERYLIFLFVWALGNAVLPAHTFVLIWGNCRLRWASLSLMLWLRYRFKNIDV.

Residues 1–8 (MVAVLQST) lie on the Extracellular side of the membrane. A helical membrane pass occupies residues 9–29 (FAIIFSMEFIVGTLGNGFIIL). The Cytoplasmic segment spans residues 30-55 (MTCIDWVRRRKISLVDQILTALAITR). Residues 56-76 (ITLILLVFIDWWVSVLFPALH) traverse the membrane as a helical segment. At 77-101 (ETGKILRMYFISWTVINHCNLWLTA) the chain is on the extracellular side. A helical membrane pass occupies residues 102–122 (SLSIIYFLKIASFSSIIFLYL). Over 123–127 (KFRVK) the chain is Cytoplasmic. Residues 128 to 148 (NVVFVTLLVSLFFLFINTAIV) form a helical membrane-spanning segment. The Extracellular segment spans residues 149–185 (NVYFDVCFDGVQRNVSQVSRLYNHEQICKFLSFTNPM). An N-linked (GlcNAc...) asparagine glycan is attached at N162. A helical transmembrane segment spans residues 186-206 (FAFIPFVTSMATFFLLIFSLW). The Cytoplasmic portion of the chain corresponds to 207-229 (RHLKNMKHNAEGCRDVSTIVHIR). Residues 230-250 (ALQTIIVSVVLYSTFFLSFFV) traverse the membrane as a helical segment. At 251–262 (KVWSSGSPERYL) the chain is on the extracellular side. A helical transmembrane segment spans residues 263 to 283 (IFLFVWALGNAVLPAHTFVLI). At 284-309 (WGNCRLRWASLSLMLWLRYRFKNIDV) the chain is on the cytoplasmic side.

It belongs to the G-protein coupled receptor T2R family.

The protein resides in the membrane. Putative taste receptor which may play a role in the perception of bitterness. The polypeptide is Taste receptor type 2 member 113 (Rattus norvegicus (Rat)).